Here is a 99-residue protein sequence, read N- to C-terminus: Integration host factor subunit alpha (99 aa).

It belongs to the bacterial histone-like protein family. Heterodimer of an alpha and a beta chain.

Functionally, this protein is one of the two subunits of integration host factor, a specific DNA-binding protein that functions in genetic recombination as well as in transcriptional and translational control. This chain is Integration host factor subunit alpha, found in Stenotrophomonas maltophilia (strain R551-3).